Reading from the N-terminus, the 93-residue chain is Ubiquinol-cytochrome-c reductase complex assembly factor 3 (93 aa).

Topologically, residues 1 to 7 (MDSLRKM) are mitochondrial matrix. A helical transmembrane segment spans residues 8–28 (LISVAMLGAGAGVGYALLVIV). Residues 23–80 (ALLVIVTPGERRKQEMLKEMPLQDPRSREEAARTQQLLLATLQEAATTQENVAWRKNW) form a mediates lipid-binding region. Residues 29–93 (TPGERRKQEM…GEGGAGGRSP (65 aa)) lie on the Mitochondrial intermembrane side of the membrane.

It belongs to the UQCC3 family. In terms of assembly, associates with the ubiquinol-cytochrome c reductase complex (mitochondrial respiratory chain complex III or cytochrome b-c1 complex). Interacts with UQCC1. Forms a complex, named COMC, composed of UQCC1, UQCC2; UQCC3 and UQCC4; mediates MT-CYB hemylation and association with the first nuclear-encoded complex III subunit UQCRQ. Post-translationally, probably cleaved by OMA1 under mitochondrial stress conditions.

It is found in the mitochondrion inner membrane. In terms of biological role, required for the assembly of the ubiquinol-cytochrome c reductase complex (mitochondrial respiratory chain complex III or cytochrome b-c1 complex), mediating cytochrome b recruitment and probably stabilization within the complex. Thereby, plays an important role in ATP production by mitochondria. Cardiolipin-binding protein, it may also control the cardiolipin composition of mitochondria membranes and their morphology. This chain is Ubiquinol-cytochrome-c reductase complex assembly factor 3, found in Homo sapiens (Human).